A 92-amino-acid chain; its full sequence is Large ribosomal subunit protein uL24 (92 aa).

It belongs to the universal ribosomal protein uL24 family. Part of the 50S ribosomal subunit.

One of two assembly initiator proteins, it binds directly to the 5'-end of the 23S rRNA, where it nucleates assembly of the 50S subunit. Functionally, one of the proteins that surrounds the polypeptide exit tunnel on the outside of the subunit. The protein is Large ribosomal subunit protein uL24 of Opitutus terrae (strain DSM 11246 / JCM 15787 / PB90-1).